A 774-amino-acid chain; its full sequence is E3 ubiquitin-protein ligase UHRF1 (774 aa).

Residues 1 to 78 (MWIQVRTMDG…IQLLVRQSLA (78 aa)) form the Ubiquitin-like domain. Phosphoserine is present on residues Ser76, Ser91, Ser93, Ser95, and Ser161. The segment at 83 to 120 (TKERDSELSDSDSGYGVGHSESDKSSTHGEGTADGDDK) is disordered. 2 tudor-like regions span residues 129–205 (GLYK…ARAR) and 212–280 (DLEV…IELP). Lys276 is covalently cross-linked (Glycyl lysine isopeptide (Lys-Gly) (interchain with G-Cter in SUMO2)). Ser284 is modified (phosphoserine). Positions 293–298 (RKSGPS) are linker. The residue at position 295 (Ser295) is a Phosphoserine; by PKA. Residues 296 to 363 (GPSCQYCKDD…EWYCPSCRTD (68 aa)) form a PHD-type zinc finger. Histone H3R2me0 binding regions lie at residues 330-334 (CDECD) and 350-352 (PPE). Ser365 bears the Phosphoserine mark. Lys382 participates in a covalent cross-link: Glycyl lysine isopeptide (Lys-Gly) (interchain with G-Cter in SUMO2). The methyl-CpG binding and interaction with HDAC1 stretch occupies residues 382-605 (KMASATSSSR…QLGLTMQYPE (224 aa)). Lys396 bears the N6-acetyllysine mark. Positions 416-578 (GPIPGVPVGT…FIVWRYLLRR (163 aa)) constitute a YDG domain. The segment at 442 to 443 (HV) is required to promote base flipping. DNA-binding positions include 460 to 461 (AG) and Asp466. 2 required for formation of a 5-methylcytosine-binding pocket regions span residues 463 to 466 (YEDD) and 475 to 478 (YTGS). Position 511 is a phosphoserine (Ser511). Lys542 carries the N6-acetyllysine; alternate modification. Residue Lys542 forms a Glycyl lysine isopeptide (Lys-Gly) (interchain with G-Cter in SUMO2); alternate linkage. Positions 616–657 (KNRKRPAKALEQGPSSSKIGKSKRKSTGPATTSPRVSKKSKL) are disordered. A Phosphoserine; by CDK1 modification is found at Ser631. Ser641 and Ser648 each carry phosphoserine. Lys656 participates in a covalent cross-link: Glycyl lysine isopeptide (Lys-Gly) (interchain with G-Cter in SUMO2). The RING-type zinc-finger motif lies at 705-744 (CICCQELVFRPVTTVCQHNVCKDCLDRSFRAQVFSCPACR). Ser751 is modified (phosphoserine).

Interacts with DNMT3A and DNMT3B. Interacts with DNMT1; the interaction is direct. Interacts with USP7; leading to its deubiquitination. Interacts with histone H3. Interacts with HDAC1, but not with HDAC2. Interacts with BLTP3A. Interacts with PML. Interacts with EHMT2. Binds methylated CpG containing oligonucleotides. Interacts with ZNF263; recruited to the SIX3 promoter along with other proteins involved in chromatin modification and transcriptional corepression where it contributes to transcriptional repression. Interacts with UHRF2. Interacts with FANCD2. Interacts with TET1 isoform 2; this interaction induces the recruitment of TET1 isoform 2 to replicating heterochromatin. Phosphorylation at Ser-295 of the linker region decreases the binding to H3K9me3. Phosphorylation at Ser-631 by CDK1 during M phase impairs interaction with USP7, preventing deubiquitination and leading to degradation by the proteasome. In terms of processing, ubiquitinated; which leads to proteasomal degradation. Autoubiquitinated; interaction with USP7 leads to deubiquitination and prevents degradation. Ubiquitination and degradation takes place during M phase, when phosphorylation at Ser-631 prevents interaction with USP7 and subsequent deubiquitination. Polyubiquitination may be stimulated by DNA damage.

The protein resides in the nucleus. It carries out the reaction S-ubiquitinyl-[E2 ubiquitin-conjugating enzyme]-L-cysteine + [acceptor protein]-L-lysine = [E2 ubiquitin-conjugating enzyme]-L-cysteine + N(6)-ubiquitinyl-[acceptor protein]-L-lysine.. Its pathway is protein modification; protein ubiquitination. Functionally, multidomain protein that acts as a key epigenetic regulator by bridging DNA methylation and chromatin modification. Specifically recognizes and binds hemimethylated DNA at replication forks via its YDG domain and recruits DNMT1 methyltransferase to ensure faithful propagation of the DNA methylation patterns through DNA replication. In addition to its role in maintenance of DNA methylation, also plays a key role in chromatin modification: through its tudor-like regions and PHD-type zinc fingers, specifically recognizes and binds histone H3 trimethylated at 'Lys-9' (H3K9me3) and unmethylated at 'Arg-2' (H3R2me0), respectively, and recruits chromatin proteins. Enriched in pericentric heterochromatin where it recruits different chromatin modifiers required for this chromatin replication. Also localizes to euchromatic regions where it negatively regulates transcription possibly by impacting DNA methylation and histone modifications. Has E3 ubiquitin-protein ligase activity by mediating the ubiquitination of target proteins such as histone H3 and PML. It is still unclear how E3 ubiquitin-protein ligase activity is related to its role in chromatin in vivo. Plays a role in DNA repair by cooperating with UHRF2 to ensure recruitment of FANCD2 to interstrand cross-links (ICLs) leading to FANCD2 activation. Plays a pivotal role in the establishment of correct spindle architecture by catalyzing the 'Lys-63'-linked ubiquitination of KIF11, thereby controlling KIF11 localization on the spindle. The sequence is that of E3 ubiquitin-protein ligase UHRF1 (Uhrf1) from Rattus norvegicus (Rat).